Reading from the N-terminus, the 174-residue chain is MNRENKQQQVAELHEKLKRAKAVFLADFRGMSVEQATTLRNELRAAAVEYKVAKNTLLELASKETDKESLSPHYAGPTAIAFSYDDPVAAAKVLSKFAKTQANTFKLKAAVLSGKQISVSDIQALADLPSREVLLAKLLGTINAPVANFVGVLAAVPGSFVRALNAIKIQKEGN.

It belongs to the universal ribosomal protein uL10 family. Part of the ribosomal stalk of the 50S ribosomal subunit. The N-terminus interacts with L11 and the large rRNA to form the base of the stalk. The C-terminus forms an elongated spine to which L12 dimers bind in a sequential fashion forming a multimeric L10(L12)X complex.

In terms of biological role, forms part of the ribosomal stalk, playing a central role in the interaction of the ribosome with GTP-bound translation factors. The sequence is that of Large ribosomal subunit protein uL10 from Geobacter metallireducens (strain ATCC 53774 / DSM 7210 / GS-15).